The sequence spans 141 residues: MDSSACKKSHQSKKWRIQAQENFAKKFPYRLSWLTEPDPEPLQPWEVTNDSNTVQLPLQKRLVPTRSIPVRGLGAPDFTSPSGSCPAPLPAPSPPPLCNLWELKLLSRRFPRQLAFLLSTRHTEAACPQTSKAAGLSRGLS.

Its subcellular location is the cytoplasm. This is an uncharacterized protein from Homo sapiens (Human).